The following is a 292-amino-acid chain: Diaminopimelate epimerase (292 aa).

Substrate contacts are provided by asparagine 13, glutamine 46, and asparagine 66. Cysteine 75 functions as the Proton donor in the catalytic mechanism. Residues 76–77 (GN), asparagine 166, asparagine 199, and 217–218 (ER) contribute to the substrate site. The active-site Proton acceptor is cysteine 226. Substrate is bound at residue 227-228 (GT).

Belongs to the diaminopimelate epimerase family. In terms of assembly, homodimer.

Its subcellular location is the cytoplasm. The catalysed reaction is (2S,6S)-2,6-diaminopimelate = meso-2,6-diaminopimelate. It participates in amino-acid biosynthesis; L-lysine biosynthesis via DAP pathway; DL-2,6-diaminopimelate from LL-2,6-diaminopimelate: step 1/1. Catalyzes the stereoinversion of LL-2,6-diaminopimelate (L,L-DAP) to meso-diaminopimelate (meso-DAP), a precursor of L-lysine and an essential component of the bacterial peptidoglycan. This chain is Diaminopimelate epimerase, found in Ralstonia pickettii (strain 12J).